A 286-amino-acid polypeptide reads, in one-letter code: MADNPLWHETLHDHFGQYFSVDNVLYHEKTDHQDLIIFDNRAFGRVMALDGVVQTTERDEFIYHEMMTHVPLLAHGNAKHVLIIGGGDGAMLREVSRHRSIETITMVEIDAGVVSFCRQYLPNHSAGAYDDPRFTLVIDDGVNFVNQTTQTFDVIISDCTDPIGPGESLFTSAFYEGCKRCLNPGGVFVAQNGVCFLQQDEAVGSHRKLSHYFRDVSFYQAAIPTYYGGIMTFAWASDNEALRHLSSEIIQARFHKANLTCRYYNPAIHTAAFALPQYLHDALSAP.

A PABS domain is found at 5-238 (PLWHETLHDH…GIMTFAWASD (234 aa)). Glutamine 33 lines the S-methyl-5'-thioadenosine pocket. Positions 64 and 88 each coordinate spermidine. S-methyl-5'-thioadenosine-binding positions include glutamate 108 and 140-141 (DG). Aspartate 158 functions as the Proton acceptor in the catalytic mechanism. 158–161 (DCTD) is a spermidine binding site. Proline 165 serves as a coordination point for S-methyl-5'-thioadenosine.

Belongs to the spermidine/spermine synthase family. In terms of assembly, homodimer or homotetramer.

It is found in the cytoplasm. The catalysed reaction is S-adenosyl 3-(methylsulfanyl)propylamine + putrescine = S-methyl-5'-thioadenosine + spermidine + H(+). The protein operates within amine and polyamine biosynthesis; spermidine biosynthesis; spermidine from putrescine: step 1/1. Catalyzes the irreversible transfer of a propylamine group from the amino donor S-adenosylmethioninamine (decarboxy-AdoMet) to putrescine (1,4-diaminobutane) to yield spermidine. The protein is Polyamine aminopropyltransferase of Klebsiella pneumoniae (strain 342).